A 218-amino-acid polypeptide reads, in one-letter code: Hypoxanthine-guanine phosphoribosyltransferase (218 aa).

Position 2 is an N-acetylalanine (Ala-2). Lys-69 contributes to the GMP binding site. Lys-103 bears the N6-acetyllysine mark. Lys-115 participates in a covalent cross-link: Glycyl lysine isopeptide (Lys-Gly) (interchain with G-Cter in SUMO1); alternate. Residue Lys-115 forms a Glycyl lysine isopeptide (Lys-Gly) (interchain with G-Cter in SUMO2); alternate linkage. Residues 134–142 (EDIIDTGKT), Lys-166, 186–188 (KFV), and Asp-194 contribute to the GMP site. Asp-138 acts as the Proton acceptor in catalysis. Thr-142 bears the Phosphothreonine mark. Asp-194 is a Mg(2+) binding site.

The protein belongs to the purine/pyrimidine phosphoribosyltransferase family. As to quaternary structure, homotetramer. Requires Mg(2+) as cofactor.

Its subcellular location is the cytoplasm. It carries out the reaction IMP + diphosphate = hypoxanthine + 5-phospho-alpha-D-ribose 1-diphosphate. The enzyme catalyses GMP + diphosphate = guanine + 5-phospho-alpha-D-ribose 1-diphosphate. Its pathway is purine metabolism; IMP biosynthesis via salvage pathway; IMP from hypoxanthine: step 1/1. In terms of biological role, converts guanine to guanosine monophosphate, and hypoxanthine to inosine monophosphate. Transfers the 5-phosphoribosyl group from 5-phosphoribosylpyrophosphate onto the purine. Plays a central role in the generation of purine nucleotides through the purine salvage pathway. The polypeptide is Hypoxanthine-guanine phosphoribosyltransferase (HPRT1) (Sus scrofa (Pig)).